The following is a 150-amino-acid chain: Ribonuclease K6 (150 aa).

An N-terminal signal peptide occupies residues 1-23 (MVLCFPLLLLLLVLWGPVCPLHA). The Proton acceptor role is filled by H38. 4 cysteine pairs are disulfide-bonded: C46–C104, C60–C114, C78–C129, and C85–C92. Residue N55 is glycosylated (N-linked (GlcNAc...) asparagine). Residues 61–65 (KHQNT) and K86 contribute to the substrate site. An N-linked (GlcNAc...) asparagine glycan is attached at N100. Residue R105 coordinates substrate. H145 serves as the catalytic Proton donor.

This sequence belongs to the pancreatic ribonuclease family. As to quaternary structure, interacts (via N-terminus) with bacterial lipopolysaccharide (LPS). In terms of tissue distribution, highly expressed in spleen (at protein level). Has little or no expression in healthy kidneys (at protein level). Detected in interstitial leukocytes in infected kidneys (at protein level). Expressed in ureter where it localizes to urothelial and submucosal leukocytes (at protein level). Strong expression in lung and thymus, and lower expression in heart, placenta, pancreas, liver, brain and skeletal muscle. Also expressed in monocytes and neutrophils.

It is found in the secreted. The protein resides in the lysosome. Its subcellular location is the cytoplasmic granule. In terms of biological role, ribonuclease which shows a preference for the pyrimidines uridine and cytosine. Has potent antibacterial activity against a range of Gram-positive and Gram-negative bacteria, including P.aeruginosa, A.baumanii, M.luteus, S.aureus, E.faecalis, E.faecium, S.saprophyticus and E.coli. Causes loss of bacterial membrane integrity, and also promotes agglutination of Gram-negative bacteria. Probably contributes to urinary tract sterility. Bactericidal activity is independent of RNase activity. In Homo sapiens (Human), this protein is Ribonuclease K6 (RNASE6).